Reading from the N-terminus, the 501-residue chain is Glucose-6-phosphate exchanger SLC37A2 (501 aa).

The chain crosses the membrane as a helical span at residues 19-39; the sequence is SWFRGLILLLTFLIYACYHMS. Residues asparagine 53, asparagine 62, and asparagine 68 are each glycosylated (N-linked (GlcNAc...) asparagine). The next 5 helical transmembrane spans lie at 88-108, 118-138, 145-165, 189-209, and 210-230; these read GGVD…SGVF, LSAG…GYFW, YFVV…PSVV, SVGN…QWGL, and SFIV…LFLI. A disordered region spans residues 240 to 262; the sequence is PPQHHGEPAENQDNPEDPGNSPC. Helical transmembrane passes span 302 to 322, 334 to 354, 362 to 382, 391 to 411, 434 to 454, and 462 to 482; these read LCLL…PLYI, GDLS…AGLV, ATTC…YNYI, IVML…ITTA, AIID…AGLI, and VFYM…RLVY.

It belongs to the major facilitator superfamily. Organophosphate:Pi antiporter (OPA) (TC 2.A.1.4) family. As to expression, detected in intestine and pancreas. Lower expression is also detected in liver and kidney.

The protein resides in the endoplasmic reticulum membrane. The catalysed reaction is D-glucose 6-phosphate(in) + phosphate(out) = D-glucose 6-phosphate(out) + phosphate(in). With respect to regulation, inhibited by vanadate but not by chlorogenic acid. In terms of biological role, inorganic phosphate and glucose-6-phosphate antiporter. May transport cytoplasmic glucose-6-phosphate into the lumen of the endoplasmic reticulum and translocate inorganic phosphate into the opposite direction. Independent of a lumenal glucose-6-phosphatase. May not play a role in homeostatic regulation of blood glucose levels. In Homo sapiens (Human), this protein is Glucose-6-phosphate exchanger SLC37A2.